Here is a 300-residue protein sequence, read N- to C-terminus: MELFLNLESRPGLIVICGPTATGKSGLAIALAEYLNTVILSADSRQVYKEFDIGTAKPTVQERQQVAHYLIDICEPTDNCTLAQYQEQANQLIQHFHQQGKTPLLVGGTGLYIQAVTEGLIIPRVAPQVELRSQLAQLAQTQLYAYLQQVDPVSAQRIHANDQVRTLRALEVYYVTGIPLSQQQGRNPPSYPICKIGLESEQLTHRIQQRTLQMLEKGWLAEVEFLLKQYGDDLPLLKTLGYAEMKQHIAGETSLEEAIQLTVLHTRQFAKRQRTWFRADAEITWLNGDDAQLLEKLQPG.

Residue 18–25 (GPTATGKS) coordinates ATP. Position 20 to 25 (20 to 25 (TATGKS)) interacts with substrate. The tract at residues 43 to 46 (DSRQ) is interaction with substrate tRNA.

It belongs to the IPP transferase family. As to quaternary structure, monomer. It depends on Mg(2+) as a cofactor.

The catalysed reaction is adenosine(37) in tRNA + dimethylallyl diphosphate = N(6)-dimethylallyladenosine(37) in tRNA + diphosphate. Catalyzes the transfer of a dimethylallyl group onto the adenine at position 37 in tRNAs that read codons beginning with uridine, leading to the formation of N6-(dimethylallyl)adenosine (i(6)A). The protein is tRNA dimethylallyltransferase of Cyanothece sp. (strain PCC 7425 / ATCC 29141).